We begin with the raw amino-acid sequence, 427 residues long: Transcription termination factor Rho (427 aa).

The region spanning 51–125 (LLFMEGVLEI…LHVEAVNGDD (75 aa)) is the Rho RNA-BD domain. Residues 168–173 (GFGQRG), 180–185 (KAGKTM), and Arg211 each bind ATP.

It belongs to the Rho family. In terms of assembly, homohexamer. The homohexamer assembles into an open ring structure.

Functionally, facilitates transcription termination by a mechanism that involves Rho binding to the nascent RNA, activation of Rho's RNA-dependent ATPase activity, and release of the mRNA from the DNA template. This is Transcription termination factor Rho from Bacillus subtilis (strain 168).